Reading from the N-terminus, the 339-residue chain is DNA-directed RNA polymerase subunit alpha (339 aa).

The interval 1 to 233 is alpha N-terminal domain (alpha-NTD); it reads MVREEVAGST…DLFLPFLHAE (233 aa). The segment at 264-339 is alpha C-terminal domain (alpha-CTD); sequence KKGIPLNCIF…IDLLKNKLSF (76 aa).

It belongs to the RNA polymerase alpha chain family. In plastids the minimal PEP RNA polymerase catalytic core is composed of four subunits: alpha, beta, beta', and beta''. When a (nuclear-encoded) sigma factor is associated with the core the holoenzyme is formed, which can initiate transcription.

Its subcellular location is the plastid. It is found in the chloroplast. The catalysed reaction is RNA(n) + a ribonucleoside 5'-triphosphate = RNA(n+1) + diphosphate. In terms of biological role, DNA-dependent RNA polymerase catalyzes the transcription of DNA into RNA using the four ribonucleoside triphosphates as substrates. This is DNA-directed RNA polymerase subunit alpha from Heteranthelium piliferum (Elymus pilifer).